The following is a 601-amino-acid chain: Glutamyl-tRNA(Gln) amidotransferase subunit B, mitochondrial (601 aa).

A mitochondrion-targeting transit peptide spans 1–52; sequence MLQQWLRQSPRAARVLRGSCCRGPQSGSLRHSPLPTAPHRCIRSLQTSATES.

The protein belongs to the GatB/GatE family. GatB subfamily. In terms of assembly, subunit of the heterotrimeric GatCAB amidotransferase (AdT) complex, composed of A, B and C subunits.

It is found in the mitochondrion. It catalyses the reaction L-glutamyl-tRNA(Gln) + L-glutamine + ATP + H2O = L-glutaminyl-tRNA(Gln) + L-glutamate + ADP + phosphate + H(+). Allows the formation of correctly charged Gln-tRNA(Gln) through the transamidation of misacylated Glu-tRNA(Gln) in the mitochondria. The reaction takes place in the presence of glutamine and ATP through an activated gamma-phospho-Glu-tRNA(Gln). This Aspergillus fumigatus (strain ATCC MYA-4609 / CBS 101355 / FGSC A1100 / Af293) (Neosartorya fumigata) protein is Glutamyl-tRNA(Gln) amidotransferase subunit B, mitochondrial.